A 283-amino-acid chain; its full sequence is Gap junction alpha-6 protein (283 aa).

Over 1–23 (MSDWSALHQLLEKVQPYSTAGGK) the chain is Cytoplasmic. The helical transmembrane segment at 24 to 41 (VWIKVLFIFRILLLGTAI) threads the bilayer. Over 42 to 76 (ESAWSDEQFEFHCNTQQPGCENVCYDHAFPISHVR) the chain is Extracellular. Residues 77–99 (LWVLQVIFVSVPILLYLAHVYYV) form a helical membrane-spanning segment. Residues 100-150 (VRQNKKLNKQEEELEAAHFNEASVERHLETIAGEQFKCGSEEQSKVKMRGR) lie on the Cytoplasmic side of the membrane. A helical transmembrane segment spans residues 151–173 (LLLTYMASIFFKSVFEMAFLLIQ). Topologically, residues 174 to 208 (WYIYGFTLSALYICEQSPCPRRVDCFLSRPTEKTI) are extracellular. A helical membrane pass occupies residues 209–231 (FILFMFVVSVVSFVLDIIELFYV). At 232–283 (LFKAIKNRMRKAEDEVYCDELPCPSHVSSSTVLTTIDSSEQAVPVELSSVCI) the chain is on the cytoplasmic side.

The protein belongs to the connexin family. Alpha-type (group II) subfamily. As to quaternary structure, a connexon is composed of a hexamer of connexins.

Its subcellular location is the cell membrane. The protein localises to the cell junction. It localises to the gap junction. Functionally, one gap junction consists of a cluster of closely packed pairs of transmembrane channels, the connexons, through which materials of low MW diffuse from one cell to a neighboring cell. The chain is Gap junction alpha-6 protein (Gja6) from Mus musculus (Mouse).